A 361-amino-acid polypeptide reads, in one-letter code: Phosphoserine aminotransferase (361 aa).

Position 43 (arginine 43) interacts with L-glutamate. Residues 77 to 78, tryptophan 103, threonine 153, aspartate 172, and glutamine 195 contribute to the pyridoxal 5'-phosphate site; that span reads AS. Lysine 196 is subject to N6-(pyridoxal phosphate)lysine. 237–238 contributes to the pyridoxal 5'-phosphate binding site; it reads NT.

It belongs to the class-V pyridoxal-phosphate-dependent aminotransferase family. SerC subfamily. As to quaternary structure, homodimer. Pyridoxal 5'-phosphate is required as a cofactor.

Its subcellular location is the cytoplasm. The enzyme catalyses O-phospho-L-serine + 2-oxoglutarate = 3-phosphooxypyruvate + L-glutamate. The catalysed reaction is 4-(phosphooxy)-L-threonine + 2-oxoglutarate = (R)-3-hydroxy-2-oxo-4-phosphooxybutanoate + L-glutamate. It functions in the pathway amino-acid biosynthesis; L-serine biosynthesis; L-serine from 3-phospho-D-glycerate: step 2/3. The protein operates within cofactor biosynthesis; pyridoxine 5'-phosphate biosynthesis; pyridoxine 5'-phosphate from D-erythrose 4-phosphate: step 3/5. Its function is as follows. Catalyzes the reversible conversion of 3-phosphohydroxypyruvate to phosphoserine and of 3-hydroxy-2-oxo-4-phosphonooxybutanoate to phosphohydroxythreonine. The protein is Phosphoserine aminotransferase of Desulfotalea psychrophila (strain LSv54 / DSM 12343).